Here is a 157-residue protein sequence, read N- to C-terminus: Probable succinate transporter subunit YjjB (157 aa).

The next 4 membrane-spanning stretches (helical) occupy residues 2-22, 55-75, 87-107, and 129-149; these read GIIS…IPAV, AGFN…SIGI, IFTV…TAMI, and FLKA…PGLW.

The protein belongs to the ThrE exporter (TC 2.A.79) family. As to quaternary structure, the transporter is composed of YjjB and YjjP.

It localises to the cell inner membrane. Its function is as follows. Involved in succinate export with YjjP. Both proteins are required for export. The sequence is that of Probable succinate transporter subunit YjjB from Klebsiella pneumoniae subsp. pneumoniae (strain ATCC 700721 / MGH 78578).